The chain runs to 359 residues: sn-1 acyl-lipid omega-3 desaturase (ferredoxin) (359 aa).

Residues 1–15 (MQLDTISFNNPLNSE) are compositionally biased toward polar residues. The tract at residues 1 to 20 (MQLDTISFNNPLNSETSEDT) is disordered. 2 consecutive transmembrane segments (helical) span residues 47 to 67 (LFYFFRDILIIGLLYAVASYL) and 70 to 90 (WLFFPIFWLMQGTMFWALFVV). Residues 92-96 (HDCGH) carry the Histidine box-1 motif. The short motif at 128 to 132 (HRTHH) is the Histidine box-2 element. 2 helical membrane-spanning segments follow: residues 207–227 (VLLIGMVGLLGFLTYQWGWMW) and 228–248 (LLKYYAVPYLVFIVWLDLVTF). The Histidine box-3 signature appears at 294–298 (HHIFL).

The protein belongs to the fatty acid desaturase type 2 family. Fe(2+) is required as a cofactor.

It is found in the membrane. The catalysed reaction is a 1-[(9Z,12Z)-octadecdienoyl]-2-acyl-glycerolipid + 2 reduced [2Fe-2S]-[ferredoxin] + O2 + 2 H(+) = a 1-[(9Z,12Z,15Z)-octadectrienoyl]-2-acyl-glycerolipid + 2 oxidized [2Fe-2S]-[ferredoxin] + 2 H2O. The enzyme catalyses a 1-[(6Z,9Z,12Z)-octadectrienoyl]-2-acyl-glycerolipid + 2 reduced [2Fe-2S]-[ferredoxin] + O2 + 2 H(+) = a 1-[(6Z,9Z,12Z,15Z)-octadectetraenoyl]-2-acyl-glycerolipid + 2 oxidized [2Fe-2S]-[ferredoxin] + 2 H2O. It participates in lipid metabolism; polyunsaturated fatty acid biosynthesis. Its function is as follows. Desaturase involved in fatty acid biosynthesis. Introduces a double bond at carbon 15 of linoleoyl and gamma-linolenoyl groups attached to the sn-1 position of the glycerol moiety of membrane glycerolipids. The chain is sn-1 acyl-lipid omega-3 desaturase (ferredoxin) from Nostoc sp. (strain 36).